Here is a 303-residue protein sequence, read N- to C-terminus: Glutamate formimidoyltransferase (303 aa).

Residue His81 is the For formimidoyltransferase activity of the active site. Folate is bound at residue 164–172; that stretch reads GPSVVGKAG.

The protein belongs to the formiminotransferase family.

The protein resides in the cytoplasm. The enzyme catalyses (6S)-5-formyl-5,6,7,8-tetrahydrofolate + L-glutamate = N-formyl-L-glutamate + (6S)-5,6,7,8-tetrahydrofolate + H(+). It catalyses the reaction 5-formimidoyltetrahydrofolate + L-glutamate = N-formimidoyl-L-glutamate + (6S)-5,6,7,8-tetrahydrofolate. It carries out the reaction (6S)-5-formyl-5,6,7,8-tetrahydrofolate + ATP = (6R)-5,10-methenyltetrahydrofolate + ADP + phosphate. The protein operates within amino-acid degradation; L-histidine degradation into L-glutamate; L-glutamate from N-formimidoyl-L-glutamate (transferase route): step 1/1. It functions in the pathway one-carbon metabolism; tetrahydrofolate interconversion. Its function is as follows. Catalyzes the transfer of the formyl group from N-formylglutamate to tetrahydrofolate (THF) to yield 5-formyltetrahydrofolate (5-CHO-THF) and glutamate (Glu). The triglutamate form of 5-CHO-THF (5-CHO-THF-Glu3) can also be used as substrate. It can also catalyze the transfer of the formimino group from N-formiminoglutamate to tetrahydrofolate (THF) to yield 5-formiminotetrahydrofolate (5-NH=CH-THF) and glutamate (Glu). It can replace YgfA to catalyze the irreversible ATP-dependent transformation of 5-CHO-THF to form 5,10-methenyltetrahydrofolate (5,10-CH=THF). In Thermoplasma acidophilum (strain ATCC 25905 / DSM 1728 / JCM 9062 / NBRC 15155 / AMRC-C165), this protein is Glutamate formimidoyltransferase.